Reading from the N-terminus, the 230-residue chain is AA9 family lytic polysaccharide monooxygenase H (230 aa).

The N-terminal stretch at 1–17 is a signal peptide; it reads MKTLSAGLLALASAASA. Cu(2+)-binding residues include His-18 and His-89. Cys-59 and Cys-178 are oxidised to a cystine. The O2 site is built by His-164 and Gln-173. Tyr-175 lines the Cu(2+) pocket.

Belongs to the polysaccharide monooxygenase AA9 family. Requires Cu(2+) as cofactor.

It localises to the secreted. It carries out the reaction [(1-&gt;4)-beta-D-glucosyl]n+m + reduced acceptor + O2 = 4-dehydro-beta-D-glucosyl-[(1-&gt;4)-beta-D-glucosyl]n-1 + [(1-&gt;4)-beta-D-glucosyl]m + acceptor + H2O.. In terms of biological role, lytic polysaccharide monooxygenase (LPMO) that depolymerizes crystalline and amorphous polysaccharides via the oxidation of scissile alpha- or beta-(1-4)-glycosidic bonds, yielding primarly C1 oxidation products. Catalysis by LPMOs requires the reduction of the active-site copper from Cu(II) to Cu(I) by a reducing agent and H(2)O(2) or O(2) as a cosubstrate. Active on hemicelluloses, including xylan, glucomannan, and xyloglucan. Preferentially cleaves residual xylan in phosphoric acid-swollen cellulose (PASC). Moreover, when exposed to cellulose-xylan blends, shows a preference for xylan and for releasing oxidized xylooligosaccharides. Has no activity on ivory nut mannan (INM), a linear beta-1,4-linked mannan without substitutions. This chain is AA9 family lytic polysaccharide monooxygenase H, found in Malbranchea cinnamomea (Thermophilic fungus).